The chain runs to 252 residues: Isoprenyl transferase (252 aa).

Residue Asp28 is part of the active site. Asp28 is a binding site for Mg(2+). Substrate-binding positions include 29 to 32 (GNGR), Trp33, Arg41, His45, and 73 to 75 (STE). Catalysis depends on Asn76, which acts as the Proton acceptor. Substrate-binding positions include Trp77, Arg79, Arg200, and 206-208 (RLS). Glu219 provides a ligand contact to Mg(2+).

It belongs to the UPP synthase family. As to quaternary structure, homodimer. Mg(2+) serves as cofactor.

Its function is as follows. Catalyzes the condensation of isopentenyl diphosphate (IPP) with allylic pyrophosphates generating different type of terpenoids. This Streptococcus pneumoniae serotype 4 (strain ATCC BAA-334 / TIGR4) protein is Isoprenyl transferase.